The primary structure comprises 313 residues: Nucleoside diphosphate-linked moiety X motif 6 (313 aa).

The region spanning 138–270 is the Nudix hydrolase domain; that stretch reads THQVGVAGAV…TSRVARLLLY (133 aa).

This sequence belongs to the Nudix hydrolase family. As to quaternary structure, monomer and homodimer.

Its subcellular location is the cytoplasm. It is found in the nucleus. The protein localises to the mitochondrion. May contribute to the regulation of cell proliferation. This chain is Nucleoside diphosphate-linked moiety X motif 6 (Nudt6), found in Mus musculus (Mouse).